Reading from the N-terminus, the 273-residue chain is Dermonecrotic toxin LapSicTox-alphaIB1ai (273 aa).

Histidine 5 is an active-site residue. Mg(2+) contacts are provided by glutamate 25 and aspartate 27. Histidine 41 acts as the Nucleophile in catalysis. Cystine bridges form between cysteine 45/cysteine 51 and cysteine 47/cysteine 190. A Mg(2+)-binding site is contributed by aspartate 85. Asparagine 250 carries N-linked (GlcNAc...) asparagine glycosylation.

Belongs to the arthropod phospholipase D family. Class II subfamily. Requires Mg(2+) as cofactor. Expressed by the venom gland.

Its subcellular location is the secreted. The catalysed reaction is an N-(acyl)-sphingosylphosphocholine = an N-(acyl)-sphingosyl-1,3-cyclic phosphate + choline. The enzyme catalyses an N-(acyl)-sphingosylphosphoethanolamine = an N-(acyl)-sphingosyl-1,3-cyclic phosphate + ethanolamine. It carries out the reaction a 1-acyl-sn-glycero-3-phosphocholine = a 1-acyl-sn-glycero-2,3-cyclic phosphate + choline. It catalyses the reaction a 1-acyl-sn-glycero-3-phosphoethanolamine = a 1-acyl-sn-glycero-2,3-cyclic phosphate + ethanolamine. In terms of biological role, dermonecrotic toxins cleave the phosphodiester linkage between the phosphate and headgroup of certain phospholipids (sphingolipid and lysolipid substrates), forming an alcohol (often choline) and a cyclic phosphate. This toxin acts on sphingomyelin (SM). It may also act on ceramide phosphoethanolamine (CPE), lysophosphatidylcholine (LPC) and lysophosphatidylethanolamine (LPE), but not on lysophosphatidylserine (LPS), and lysophosphatidylglycerol (LPG). It acts by transphosphatidylation, releasing exclusively cyclic phosphate products as second products. Induces dermonecrosis, hemolysis, increased vascular permeability, edema, inflammatory response, and platelet aggregation. This is Dermonecrotic toxin LapSicTox-alphaIB1ai from Loxosceles apachea (Apache recluse spider).